A 178-amino-acid chain; its full sequence is MDKKTRLKLDGVIVCEGKTDQARLQQLFDVSVITTNGSALNQRTINLIKAVAKKQPVILFLDPDVAGQKIRRQLEQHLDKYESCFIARKDMKPNSTKIGVAEATDAALIQALQQRQVFTKTTQPTLSWEQYLELNLNSKSKRLALCNKLHLSYFNHKQLFRKLNLLQLTFDQVCQLLK.

Positions 10-103 (DGVIVCEGKT…NSTKIGVAEA (94 aa)) constitute a Toprim domain. Positions 16, 62, and 64 each coordinate Mg(2+).

It belongs to the ribonuclease M5 family. Mg(2+) serves as cofactor.

It is found in the cytoplasm. It catalyses the reaction Endonucleolytic cleavage of RNA, removing 21 and 42 nucleotides, respectively, from the 5'- and 3'-termini of a 5S-rRNA precursor.. In terms of biological role, required for correct processing of both the 5' and 3' ends of 5S rRNA precursor. Cleaves both sides of a double-stranded region yielding mature 5S rRNA in one step. The chain is Ribonuclease M5 from Mycoplasma pneumoniae (strain ATCC 29342 / M129 / Subtype 1) (Mycoplasmoides pneumoniae).